The following is a 199-amino-acid chain: Thymidylate kinase (199 aa).

7–14 contributes to the ATP binding site; it reads GIDGSGKS.

This sequence belongs to the thymidylate kinase family.

It catalyses the reaction dTMP + ATP = dTDP + ADP. Functionally, phosphorylation of dTMP to form dTDP in both de novo and salvage pathways of dTTP synthesis. The chain is Thymidylate kinase from Neorickettsia sennetsu (strain ATCC VR-367 / Miyayama) (Ehrlichia sennetsu).